Consider the following 236-residue polypeptide: Small ribosomal subunit protein uS3 (236 aa).

Residues 39-107 (IRSYVLEELR…ETSLNIVEIR (69 aa)) enclose the KH type-2 domain. A disordered region spans residues 214–236 (ASERRATEADQSGSSSNRRRENA).

The protein belongs to the universal ribosomal protein uS3 family. Part of the 30S ribosomal subunit. Forms a tight complex with proteins S10 and S14.

Its function is as follows. Binds the lower part of the 30S subunit head. Binds mRNA in the 70S ribosome, positioning it for translation. The protein is Small ribosomal subunit protein uS3 of Bartonella tribocorum (strain CIP 105476 / IBS 506).